The following is a 105-amino-acid chain: Small ribosomal subunit protein uS10 (105 aa).

Belongs to the universal ribosomal protein uS10 family. Part of the 30S ribosomal subunit.

In terms of biological role, involved in the binding of tRNA to the ribosomes. This Anaplasma phagocytophilum (strain HZ) protein is Small ribosomal subunit protein uS10.